The following is a 74-amino-acid chain: uncharacterized protein (74 aa).

The helical transmembrane segment at 15–32 (FLHALTVTFLSDIFVWLV) threads the bilayer.

Its subcellular location is the membrane. This is an uncharacterized protein from Saccharomyces cerevisiae (strain ATCC 204508 / S288c) (Baker's yeast).